We begin with the raw amino-acid sequence, 1097 residues long: Mitochondrial distribution and morphology protein 34 (1097 aa).

Positions 1–198 (MSFNFKWPTF…LPGIIHRLSQ (198 aa)) constitute an SMP-LTD domain. Disordered regions lie at residues 204–305 (EAKS…PLHS), 317–343 (AAFP…SGFS), 390–427 (QSDD…LDAV), 480–520 (DDQP…TSSL), 556–600 (PEVD…SSRT), 645–675 (LDAE…RDLS), 716–817 (GQNA…SPGV), and 923–1097 (GSSA…AIRE). Positions 205–229 (AKSEKDKVKQKAEAEEPPARSREPT) are enriched in basic and acidic residues. Basic residues predominate over residues 252 to 263 (RKSHSKAKKHSR). Over residues 274-283 (SPCQSPQRPR) the composition is skewed to low complexity. The segment covering 284 to 293 (QSPRRPRHVA) has biased composition (basic residues). The segment covering 406-416 (SSSHDGKHDEG) has biased composition (basic and acidic residues). Low complexity-rich tracts occupy residues 508 to 519 (SSRSDRSACTSS) and 572 to 586 (GGTP…RFGS). Residues 662–675 (TNPTSRESSYRDLS) show a composition bias toward polar residues. Low complexity predominate over residues 759–779 (GMSATPARTRASAAASARSRP). Residues 784–796 (YATSPPGDSSGWQ) are compositionally biased toward polar residues. Over residues 923–943 (GSSAASGTGTTSGSSQTGANA) the composition is skewed to low complexity. Residues 1004–1024 (SNKPNNTSTGQGEDSQDNSAA) are compositionally biased toward polar residues. A compositionally biased stretch (low complexity) spans 1045 to 1059 (ASGSSASSAITDSSS).

Belongs to the MDM34 family. Component of the ER-mitochondria encounter structure (ERMES) or MDM complex, composed of MMM1, MDM10, MDM12 and MDM34.

The protein localises to the mitochondrion outer membrane. In terms of biological role, component of the ERMES/MDM complex, which serves as a molecular tether to connect the endoplasmic reticulum (ER) and mitochondria. Components of this complex are involved in the control of mitochondrial shape and protein biogenesis, and function in nonvesicular lipid trafficking between the ER and mitochondria. MDM34 is required for the interaction of the ER-resident membrane protein MMM1 and the outer mitochondrial membrane-resident beta-barrel protein MDM10. The polypeptide is Mitochondrial distribution and morphology protein 34 (Mycosarcoma maydis (Corn smut fungus)).